A 583-amino-acid polypeptide reads, in one-letter code: Bifunctional lycopene cyclase/phytoene synthase (583 aa).

The interval 1 to 243 (MGFDYALVHL…IVFGQLAFDN (243 aa)) is lycopene beta-cyclase. 7 helical membrane passes run 3-23 (FDYA…LTWL), 35-55 (KVGY…SYLI), 75-97 (IPLE…YLLL), 120-140 (YMRL…WRCI), 151-171 (LILV…YQFI), 173-193 (ALPV…LWVV), and 221-241 (IEEA…QLAF). The phytoene synthase stretch occupies residues 250 to 583 (TFPHLFTGPS…MVAWRTLNSK (334 aa)).

In the N-terminal section; belongs to the lycopene beta-cyclase family. This sequence in the C-terminal section; belongs to the phytoene/squalene synthase family.

It localises to the membrane. It carries out the reaction all-trans-lycopene = gamma-carotene. It catalyses the reaction gamma-carotene = all-trans-beta-carotene. The enzyme catalyses 2 (2E,6E,10E)-geranylgeranyl diphosphate = 15-cis-phytoene + 2 diphosphate. It participates in carotenoid biosynthesis; beta-carotene biosynthesis. Its pathway is carotenoid biosynthesis; phytoene biosynthesis; all-trans-phytoene from geranylgeranyl diphosphate: step 1/1. In terms of biological role, bifunctional enzyme that catalyzes the reactions from geranylgeranyl diphosphate to phytoene (phytoene synthase) and lycopene to beta-carotene via the intermediate gamma-carotene (lycopene cyclase). The protein is Bifunctional lycopene cyclase/phytoene synthase of Pyrenophora tritici-repentis (strain Pt-1C-BFP) (Wheat tan spot fungus).